The chain runs to 354 residues: 5,10-methenyltetrahydromethanopterin hydrogenase (354 aa).

This sequence belongs to the HMD family.

It carries out the reaction 5,10-methenyl-5,6,7,8-tetrahydromethanopterin + H2 = 5,10-methylenetetrahydromethanopterin + H(+). It participates in one-carbon metabolism; methanogenesis from CO(2); 5,10-methylene-5,6,7,8-tetrahydromethanopterin from 5,10-methenyl-5,6,7,8-tetrahydromethanopterin (hydrogen route): step 1/1. Functionally, catalyzes the reversible reduction of methenyl-H(4)MPT(+) to methylene-H(4)MPT. In Methanococcus maripaludis (strain C5 / ATCC BAA-1333), this protein is 5,10-methenyltetrahydromethanopterin hydrogenase.